Consider the following 710-residue polypeptide: Choline transporter-like protein 5 (710 aa).

The interval 1–21 (MARKRKPPSSQGDPRRYDPDF) is disordered. Topologically, residues 1–32 (MARKRKPPSSQGDPRRYDPDFQGPTAKRTCTD) are cytoplasmic. The chain crosses the membrane as a helical span at residues 33 to 53 (VLCCLIFLLFILGYVLLGLLA). The Extracellular segment spans residues 54 to 236 (WAHGDPRKMA…KLLEDYATSW (183 aa)). Asn82 and Asn184 each carry an N-linked (GlcNAc...) asparagine glycan. A helical transmembrane segment spans residues 237–257 (KWILIGLTVAMALSWTFLILL). At 258–260 (RFT) the chain is on the cytoplasmic side. A helical transmembrane segment spans residues 261–281 (AGFLFWFFIFGVLGIIGYGIW). The Extracellular segment spans residues 282–319 (YCFLEYSSIQQRPQSTFWMYGFGIQRRVNMFFHLKETW). A helical membrane pass occupies residues 320 to 340 (FSMMIILSAIEIIIIIVLIFL). The Cytoplasmic segment spans residues 341-345 (RTRIQ). A helical membrane pass occupies residues 346 to 366 (VAIILLQEGSKAISYLPSALI). Over 367-368 (YP) the chain is Extracellular. The chain crosses the membrane as a helical span at residues 369 to 389 (VLTFILLSICISYWAVTAVFL). At 390–454 (ATSGVPIFKV…NYILTFQVYN (65 aa)) the chain is on the cytoplasmic side. Residues 455-475 (LFAFLWLINFVIALGQCALAG) form a helical membrane-spanning segment. Residues 476–509 (AFASYYWAMKKPDDIPPYPLFTAFGRAVRYHTGS) are Extracellular-facing. The helical transmembrane segment at 510–530 (LAFGSLILASVQMFKVIVEYL) threads the bilayer. At 531-604 (DRRLKKAQNS…KVTVTDEVTY (74 aa)) the chain is on the cytoplasmic side. The helical transmembrane segment at 605 to 625 (FVLLLGKVLVSGIVGVLAFLL) threads the bilayer. Residues 626-643 (FTERLQIIVDGPTTLNYY) are Extracellular-facing. Residues 644-664 (WVPFLTLVFGSYMIAHGFFSV) form a helical membrane-spanning segment. Over 665 to 710 (YSMCVETIFICFLEDLERNEGSPSRPYFVTPALMNILLEQGKIKKQ) the chain is Cytoplasmic.

Belongs to the CTL (choline transporter-like) family.

Its subcellular location is the cell membrane. It catalyses the reaction choline(out) + n H(+)(in) = choline(in) + n H(+)(out). Choline/H+ antiporter. In Mus musculus (Mouse), this protein is Choline transporter-like protein 5 (Slc44a5).